The primary structure comprises 67 residues: ATP synthase F(0) complex subunit 8 (67 aa).

Residues 8 to 24 (TWFIMIFSMFLTLFILF) form a helical membrane-spanning segment. K54 is subject to N6-acetyllysine; alternate. An N6-succinyllysine; alternate modification is found at K54. Residue K57 is modified to N6-acetyllysine.

This sequence belongs to the ATPase protein 8 family. Component of the ATP synthase complex composed at least of ATP5F1A/subunit alpha, ATP5F1B/subunit beta, ATP5MC1/subunit c (homooctomer), MT-ATP6/subunit a, MT-ATP8/subunit 8, ATP5ME/subunit e, ATP5MF/subunit f, ATP5MG/subunit g, ATP5MK/subunit k, ATP5MJ/subunit j, ATP5F1C/subunit gamma, ATP5F1D/subunit delta, ATP5F1E/subunit epsilon, ATP5PF/subunit F6, ATP5PB/subunit b, ATP5PD/subunit d, ATP5PO/subunit OSCP. ATP synthase complex consists of a soluble F(1) head domain (subunits alpha(3) and beta(3)) - the catalytic core - and a membrane F(0) domain - the membrane proton channel (subunits c, a, 8, e, f, g, k and j). These two domains are linked by a central stalk (subunits gamma, delta, and epsilon) rotating inside the F1 region and a stationary peripheral stalk (subunits F6, b, d, and OSCP). Interacts with PRICKLE3.

The protein resides in the mitochondrion membrane. Functionally, subunit 8, of the mitochondrial membrane ATP synthase complex (F(1)F(0) ATP synthase or Complex V) that produces ATP from ADP in the presence of a proton gradient across the membrane which is generated by electron transport complexes of the respiratory chain. ATP synthase complex consist of a soluble F(1) head domain - the catalytic core - and a membrane F(1) domain - the membrane proton channel. These two domains are linked by a central stalk rotating inside the F(1) region and a stationary peripheral stalk. During catalysis, ATP synthesis in the catalytic domain of F(1) is coupled via a rotary mechanism of the central stalk subunits to proton translocation. In vivo, can only synthesize ATP although its ATP hydrolase activity can be activated artificially in vitro. Part of the complex F(0) domain. This chain is ATP synthase F(0) complex subunit 8, found in Canis lupus familiaris (Dog).